A 440-amino-acid polypeptide reads, in one-letter code: Protein disulfide-isomerase A6 (440 aa).

Positions 1 to 19 (MARLVLGLVSCTFFLAVSG) are cleaved as a signal peptide. Thioredoxin domains lie at 20 to 133 (LYSS…ALRQ) and 151 to 287 (QGRG…EDIA). The cysteines at positions 55 and 58 are disulfide-linked. Phosphoserine occurs at positions 129, 156, and 158. The interval 139 to 161 (LGGRSGGYSSGKQGRGDSSSKKD) is disordered. Residues 152–161 (GRGDSSSKKD) show a composition bias toward basic and acidic residues. A disulfide bridge connects residues cysteine 190 and cysteine 193. The segment at 399–440 (GGGSFPTITPREPWDGKDGELPVEDDIDLSDVELDDLEKDEL) is disordered. A compositionally biased stretch (acidic residues) spans 419–440 (LPVEDDIDLSDVELDDLEKDEL). A Phosphoserine modification is found at serine 428. The Prevents secretion from ER motif lies at 437 to 440 (KDEL).

The protein belongs to the protein disulfide isomerase family. In terms of assembly, part of a large chaperone multiprotein complex comprising DNAJB11, HSP90B1, HSPA5, HYOU, PDIA2, PDIA4, PDIA6, PPIB, SDF2L1, UGGT1 and very small amounts of ERP29, but not, or at very low levels, CALR nor CANX. Interacts with MICA on the surface of tumor cells, leading to MICA disulfide bond reduction which is required for its release from tumor cells. Interacts with ITGB3 following platelet stimulation. Interacts with ERN1; the interaction is direct. Interacts with EIF2AK3.

It is found in the endoplasmic reticulum lumen. Its subcellular location is the cell membrane. It localises to the melanosome. It carries out the reaction Catalyzes the rearrangement of -S-S- bonds in proteins.. May function as a chaperone that inhibits aggregation of misfolded proteins. Negatively regulates the unfolded protein response (UPR) through binding to UPR sensors such as ERN1, which in turn inactivates ERN1 signaling. May also regulate the UPR via the EIF2AK3 UPR sensor. Plays a role in platelet aggregation and activation by agonists such as convulxin, collagen and thrombin. The chain is Protein disulfide-isomerase A6 (Pdia6) from Mus musculus (Mouse).